Here is a 192-residue protein sequence, read N- to C-terminus: Adenylate kinase (192 aa).

10-18 (GVPGVGSTT) is a binding site for ATP.

This sequence belongs to the archaeal adenylate kinase family. Monomer.

The protein resides in the cytoplasm. It catalyses the reaction AMP + ATP = 2 ADP. This is Adenylate kinase (adkA) from Methanococcus voltae.